Here is a 403-residue protein sequence, read N- to C-terminus: Alkaline protease 1 (403 aa).

A signal peptide spans 1-21 (MLSIKRTLLLLGAVLPAVFGA). Positions 22–125 (PVQETRRAAQ…QIWYLDALTT (104 aa)) are excised as a propeptide. Residues 36–120 (KYIVTFKPGT…HVEEDQIWYL (85 aa)) form the Inhibitor I9 domain. Residues 130–403 (PWGLGSISHK…PNKLAYNGNA (274 aa)) form the Peptidase S8 domain. Active-site charge relay system residues include D162 and H193. 2 N-linked (GlcNAc...) asparagine glycosylation sites follow: N253 and N307. S349 (charge relay system) is an active-site residue. A glycan (N-linked (GlcNAc...) asparagine) is linked at N367.

Belongs to the peptidase S8 family.

It localises to the secreted. It catalyses the reaction Hydrolysis of proteins with broad specificity, and of Bz-Arg-OEt &gt; Ac-Tyr-OEt. Does not hydrolyze peptide amides.. Its function is as follows. Secreted alkaline protease that allows assimilation of proteinaceous substrates. Acts as a significant virulence factor in invasive aspergillosis. Involved in immune evasion from the human and mice complement systems during infection. Efficiently cleaves important components of the complement cascade such as such as C3, C4, C5, and C1q, as well as IgG, which leads to down-regulation of complement activation at the hyphal surface. The chain is Alkaline protease 1 (alp1) from Aspergillus fumigatus (strain CBS 144.89 / FGSC A1163 / CEA10) (Neosartorya fumigata).